The primary structure comprises 309 residues: L-aminoadipate-semialdehyde dehydrogenase-phosphopantetheinyl transferase (309 aa).

Residues arginine 47, 86–91 (RTAKGK), and 108–111 (NISH) contribute to the CoA site. Residues aspartate 129 and glutamate 181 each coordinate Mg(2+). 181 to 185 (ESFIK) is a binding site for CoA. Position 258 is a phosphoserine (serine 258).

The protein belongs to the P-Pant transferase superfamily. AcpS family. In terms of assembly, monomer. Mg(2+) is required as a cofactor. Detected in heart, skeletal muscle, placenta, testis, brain, pancreas, liver and kidney.

Its subcellular location is the cytoplasm. It is found in the cytosol. It carries out the reaction apo-[ACP] + CoA = holo-[ACP] + adenosine 3',5'-bisphosphate + H(+). The catalysed reaction is apo-[ACP] + acetyl-CoA = acetyl-[ACP] + adenosine 3',5'-bisphosphate + H(+). In terms of biological role, catalyzes the post-translational modification of target proteins by phosphopantetheine. Can transfer the 4'-phosphopantetheine moiety from coenzyme A, regardless of whether the CoA is presented in the free thiol form or as an acetyl thioester, to a serine residue of a broad range of acceptors including the acyl carrier domain of FASN. In Homo sapiens (Human), this protein is L-aminoadipate-semialdehyde dehydrogenase-phosphopantetheinyl transferase (AASDHPPT).